A 963-amino-acid chain; its full sequence is SH3 domain-binding protein 4 (963 aa).

The 60-residue stretch at 55-114 folds into the SH3 1 domain; that stretch reads GNAKEVIAIKDYCPTNFTTLKFSKGDHLYVLDTSGGEWWYAHNTTEMGYIPSSYVQPLNY. Residues S131, S246, S251, S279, and S296 each carry the phosphoserine modification. Positions 317–454 constitute a ZU5 domain; sequence TNIVCKLDSS…LEPCMYVAVV (138 aa). Residue S637 is modified to Phosphoserine. An SH3 2 domain is found at 654–724; sequence SSLKFGKLLK…HTKNVLVVGR (71 aa).

As to quaternary structure, homodimer or homooligomer. Interacts with DNM2, EPS15, clathrin, the adapter protein complex 2/AP-2 and TFRC. Interacts with the Rag GTPases RRAGA, RRAGB, RRAGC and RRAGD; the interaction is most probably direct, preferentially occurs with their inactive GDP-bound form and is negatively regulated by amino acids. In terms of assembly, (Microbial infection) Interacts with molluscum contagiosum virus protein MC159L; this interaction is important for the suppression of autophagy. Phosphorylated upon EGF stimulation. Phosphorylation prevents interaction with DNM2. In terms of tissue distribution, expressed in all tissues tested with higher expression in pancreas. Expressed by retinal pigment epithelial cells (at protein level).

Its subcellular location is the membrane. It localises to the clathrin-coated pit. It is found in the cytoplasmic vesicle. The protein resides in the clathrin-coated vesicle. The protein localises to the nucleus. Functionally, may function in transferrin receptor internalization at the plasma membrane through a cargo-specific control of clathrin-mediated endocytosis. Alternatively, may act as a negative regulator of the amino acid-induced TOR signaling by inhibiting the formation of active Rag GTPase complexes. Preferentially binds inactive Rag GTPase complexes and prevents their interaction with the mTORC1 complex inhibiting its relocalization to lysosomes and its activation. Thereby, may indirectly regulate cell growth, proliferation and autophagy. This Homo sapiens (Human) protein is SH3 domain-binding protein 4 (SH3BP4).